Here is a 229-residue protein sequence, read N- to C-terminus: Flagellar L-ring protein (229 aa).

Positions 1-25 are cleaved as a signal peptide; sequence MKQVRLPSSATVRAACAVAVAALAG. C26 carries N-palmitoyl cysteine lipidation. Residue C26 is the site of S-diacylglycerol cysteine attachment.

It belongs to the FlgH family. As to quaternary structure, the basal body constitutes a major portion of the flagellar organelle and consists of four rings (L,P,S, and M) mounted on a central rod.

The protein localises to the cell outer membrane. Its subcellular location is the bacterial flagellum basal body. In terms of biological role, assembles around the rod to form the L-ring and probably protects the motor/basal body from shearing forces during rotation. The chain is Flagellar L-ring protein from Burkholderia cenocepacia (strain ATCC BAA-245 / DSM 16553 / LMG 16656 / NCTC 13227 / J2315 / CF5610) (Burkholderia cepacia (strain J2315)).